The following is a 582-amino-acid chain: Protein NUCLEAR FUSION DEFECTIVE 4 (582 aa).

Positions 1–20 are disordered; sequence MRPRIRDVSDKLRPNRASFD. Helical transmembrane passes span 46–66, 100–120, 132–152, 172–192, 202–222, 243–263, 270–290, and 358–378; these read VLVAAIWIQASTGTNFDFSAY, IALGYFPLSVVLFAAAAMGFV, IITLPYSLVFLCCLLAGLSIC, LALSLTVSFNGISAALYSLAF, LYLLLNSLVPLVVSFAALYPV, VFTILNVLAVITSFHLLLSSS, LNFIGAVVLLVFPLCAPLLVY, and LEFWLYYIAYFCGGTIGLVYS. Asn391 carries N-linked (GlcNAc...) asparagine glycosylation. A run of 5 helical transmembrane segments spans residues 395-412, 425-445, 458-478, 489-509, and 536-556; these read LVTIYSSFSFFGRLLSAA, TGWFAIALLPTPIAFFLLAVS, LIGLSSGFIFAAAVSITSDLF, ILITNIPIGSLLYGYIAASIY, and TFVFWGCLSILGVVSSLSLYI.

Its subcellular location is the membrane. In terms of biological role, required for karyogamy during female gametophyte development, when the two polar nuclei fuse to form the diploid central cell nucleus. This chain is Protein NUCLEAR FUSION DEFECTIVE 4, found in Arabidopsis thaliana (Mouse-ear cress).